A 261-amino-acid polypeptide reads, in one-letter code: Imidazole glycerol phosphate synthase subunit HisF (261 aa).

Catalysis depends on residues aspartate 16 and aspartate 135.

The protein belongs to the HisA/HisF family. As to quaternary structure, heterodimer of HisH and HisF.

It is found in the cytoplasm. It catalyses the reaction 5-[(5-phospho-1-deoxy-D-ribulos-1-ylimino)methylamino]-1-(5-phospho-beta-D-ribosyl)imidazole-4-carboxamide + L-glutamine = D-erythro-1-(imidazol-4-yl)glycerol 3-phosphate + 5-amino-1-(5-phospho-beta-D-ribosyl)imidazole-4-carboxamide + L-glutamate + H(+). It participates in amino-acid biosynthesis; L-histidine biosynthesis; L-histidine from 5-phospho-alpha-D-ribose 1-diphosphate: step 5/9. In terms of biological role, IGPS catalyzes the conversion of PRFAR and glutamine to IGP, AICAR and glutamate. The HisF subunit catalyzes the cyclization activity that produces IGP and AICAR from PRFAR using the ammonia provided by the HisH subunit. This Mycobacterium marinum (strain ATCC BAA-535 / M) protein is Imidazole glycerol phosphate synthase subunit HisF.